The following is a 238-amino-acid chain: LexA repressor (238 aa).

A DNA-binding region (H-T-H motif) is located at residues 26-46 (FDEMKDALDLASKSGIHRLIT). Residues serine 158 and lysine 196 each act as for autocatalytic cleavage activity in the active site.

Belongs to the peptidase S24 family. Homodimer.

It carries out the reaction Hydrolysis of Ala-|-Gly bond in repressor LexA.. Represses a number of genes involved in the response to DNA damage (SOS response), including recA and lexA. In the presence of single-stranded DNA, RecA interacts with LexA causing an autocatalytic cleavage which disrupts the DNA-binding part of LexA, leading to derepression of the SOS regulon and eventually DNA repair. This is LexA repressor from Rhizobium meliloti (strain 1021) (Ensifer meliloti).